The sequence spans 608 residues: Protein FAM151A (608 aa).

Residues tryptophan 14 to leucine 34 form a helical membrane-spanning segment. The segment at arginine 588–arginine 608 is disordered.

Belongs to the menorin family.

The protein localises to the membrane. In Rattus norvegicus (Rat), this protein is Protein FAM151A (Fam151a).